The primary structure comprises 396 residues: Chorismate synthase (396 aa).

NADP(+) is bound by residues Arg-40 and Arg-46. FMN is bound by residues 134–136 (RSS), 257–258 (QA), Gly-302, 317–321 (KPIPS), and Arg-343.

It belongs to the chorismate synthase family. As to quaternary structure, homotetramer. FMNH2 is required as a cofactor.

It carries out the reaction 5-O-(1-carboxyvinyl)-3-phosphoshikimate = chorismate + phosphate. It participates in metabolic intermediate biosynthesis; chorismate biosynthesis; chorismate from D-erythrose 4-phosphate and phosphoenolpyruvate: step 7/7. Its function is as follows. Catalyzes the anti-1,4-elimination of the C-3 phosphate and the C-6 proR hydrogen from 5-enolpyruvylshikimate-3-phosphate (EPSP) to yield chorismate, which is the branch point compound that serves as the starting substrate for the three terminal pathways of aromatic amino acid biosynthesis. This reaction introduces a second double bond into the aromatic ring system. In Bifidobacterium animalis subsp. lactis (strain AD011), this protein is Chorismate synthase.